A 509-amino-acid chain; its full sequence is MGLPWYRVHTVVLNDPGRLIAVHLMHTALVAGWAGSMALYELAVFDPSDPVLNPMWRQGMFVMPFMARLGVTDSWGGWSITGESVSNPGLWSLEGVALTHIVLSGMLFLAAIWHWVYWDLELFRDPRTGEPALDLPKIFGIHLLLSSLLCFGFGAFHVTGLFGPGMWVSDGYGVTGKVLPVAPAWGPEGFNPFNPGGVASHHIAAGTVGILAGVFHLTVRPPQRLYRALRMGNIETVLSSSISAVFFSAFITCGTMWYGSATTPIELFGPTRYQWDSGYFQQEIEKRVENAIADGAAPSEAWSRIPDKLAFYDYIGNNPAKGGLFRAGPMNKGDGVAEAWLGHPVFQDKEGRELSVRRMPAFFETFPVILVDKDGIIRADIPFRRAESKYSIEQVGVTASFYGGKLNGQVFNDAPSVKKYARKAQLGEVFEFDRTTLESDGVFRSSPRGWFTFGHANFALIFFFGHLWHGSRTIFRDVFAGIGAEVTEQVEFGAFQKLGDRSSKKQGAV.

Transmembrane regions (helical) follow at residues 21 to 36, 101 to 115, 140 to 156, 203 to 218, 237 to 252, and 457 to 472; these read AVHL…WAGS, IVLS…IWHW, GIHL…FGAF, IAAG…FHLT, VLSS…AFIT, and NFAL…HGSR.

This sequence belongs to the PsbB/PsbC family. PsbB subfamily. As to quaternary structure, PSII is composed of 1 copy each of membrane proteins PsbA, PsbB, PsbC, PsbD, PsbE, PsbF, PsbH, PsbI, PsbJ, PsbK, PsbL, PsbM, PsbT, PsbX, PsbY, PsbZ, Psb30/Ycf12, at least 3 peripheral proteins of the oxygen-evolving complex and a large number of cofactors. It forms dimeric complexes. Requires Binds multiple chlorophylls. PSII binds additional chlorophylls, carotenoids and specific lipids. as cofactor.

It localises to the plastid. The protein resides in the chloroplast thylakoid membrane. Functionally, one of the components of the core complex of photosystem II (PSII). It binds chlorophyll and helps catalyze the primary light-induced photochemical processes of PSII. PSII is a light-driven water:plastoquinone oxidoreductase, using light energy to abstract electrons from H(2)O, generating O(2) and a proton gradient subsequently used for ATP formation. This chain is Photosystem II CP47 reaction center protein, found in Porphyra purpurea (Red seaweed).